The chain runs to 254 residues: Ubiquinone/menaquinone biosynthesis C-methyltransferase UbiE (254 aa).

S-adenosyl-L-methionine is bound by residues T77, D98, 126–127 (NA), and S143.

The protein belongs to the class I-like SAM-binding methyltransferase superfamily. MenG/UbiE family.

It catalyses the reaction a 2-demethylmenaquinol + S-adenosyl-L-methionine = a menaquinol + S-adenosyl-L-homocysteine + H(+). The enzyme catalyses a 2-methoxy-6-(all-trans-polyprenyl)benzene-1,4-diol + S-adenosyl-L-methionine = a 5-methoxy-2-methyl-3-(all-trans-polyprenyl)benzene-1,4-diol + S-adenosyl-L-homocysteine + H(+). It participates in quinol/quinone metabolism; menaquinone biosynthesis; menaquinol from 1,4-dihydroxy-2-naphthoate: step 2/2. It functions in the pathway cofactor biosynthesis; ubiquinone biosynthesis. Its function is as follows. Methyltransferase required for the conversion of demethylmenaquinol (DMKH2) to menaquinol (MKH2) and the conversion of 2-polyprenyl-6-methoxy-1,4-benzoquinol (DDMQH2) to 2-polyprenyl-3-methyl-6-methoxy-1,4-benzoquinol (DMQH2). This chain is Ubiquinone/menaquinone biosynthesis C-methyltransferase UbiE, found in Hydrogenovibrio crunogenus (strain DSM 25203 / XCL-2) (Thiomicrospira crunogena).